Reading from the N-terminus, the 947-residue chain is DNA polymerase (947 aa).

Belongs to the DNA polymerase type-B family.

It carries out the reaction DNA(n) + a 2'-deoxyribonucleoside 5'-triphosphate = DNA(n+1) + diphosphate. The sequence is that of DNA polymerase from Red sea bream iridovirus (RSIV).